A 233-amino-acid polypeptide reads, in one-letter code: MSSQFIFEDVPQRNAATFNPEVGYVAFIGKYGQQLNFGVARVFFLNQKKAKMVLHKTAQPSVDLTFGGVKFTVVNNHFPQYVSNPVPDNAITLHRMSGYLARWIADTCKASVLKLAEASAQIVMPLAEVKGCTWADGYTMYLGFAPGAEMFLDAFDFYPLVIEMHRVLKDNMDVNFMKKVLRQRYGTMTAEEWMTQKITEIKAAFNSVGQLAWAKSGFSPAARTFLQQFGINI.

Residues Gln12, Ala15, Ala16, Lys48, Lys51, His77, Arg95, Arg166, Lys178, Lys179, Arg182, and Arg184 each coordinate RNA.

This sequence belongs to the orthobunyavirus nucleocapsid protein family. Homotetramer. Binds the viral genomic RNA.

The protein localises to the virion. Its function is as follows. Encapsidates the genome, protecting it from nucleases. The encapsidated genomic RNA is termed the nucleocapsid (NC) and serves as template for transcription and replication. The NC have a helical organization. In Bos taurus (Bovine), this protein is Nucleoprotein (N).